The chain runs to 444 residues: Tubulin beta chain (444 aa).

8 residues coordinate GTP: glutamine 11, glutamate 69, serine 138, glycine 142, threonine 143, glycine 144, asparagine 204, and asparagine 226. Position 69 (glutamate 69) interacts with Mg(2+).

Belongs to the tubulin family. As to quaternary structure, dimer of alpha and beta chains. A typical microtubule is a hollow water-filled tube with an outer diameter of 25 nm and an inner diameter of 15 nM. Alpha-beta heterodimers associate head-to-tail to form protofilaments running lengthwise along the microtubule wall with the beta-tubulin subunit facing the microtubule plus end conferring a structural polarity. Microtubules usually have 13 protofilaments but different protofilament numbers can be found in some organisms and specialized cells. It depends on Mg(2+) as a cofactor.

The protein resides in the cytoplasm. The protein localises to the cytoskeleton. Its function is as follows. Tubulin is the major constituent of microtubules, a cylinder consisting of laterally associated linear protofilaments composed of alpha- and beta-tubulin heterodimers. Microtubules grow by the addition of GTP-tubulin dimers to the microtubule end, where a stabilizing cap forms. Below the cap, tubulin dimers are in GDP-bound state, owing to GTPase activity of alpha-tubulin. The protein is Tubulin beta chain (TBB) of Onchocerca gibsoni.